The sequence spans 975 residues: Glycine dehydrogenase (decarboxylating) (975 aa).

Lys723 carries the N6-(pyridoxal phosphate)lysine modification.

The protein belongs to the GcvP family. The glycine cleavage system is composed of four proteins: P, T, L and H. Requires pyridoxal 5'-phosphate as cofactor.

The enzyme catalyses N(6)-[(R)-lipoyl]-L-lysyl-[glycine-cleavage complex H protein] + glycine + H(+) = N(6)-[(R)-S(8)-aminomethyldihydrolipoyl]-L-lysyl-[glycine-cleavage complex H protein] + CO2. In terms of biological role, the glycine cleavage system catalyzes the degradation of glycine. The P protein binds the alpha-amino group of glycine through its pyridoxal phosphate cofactor; CO(2) is released and the remaining methylamine moiety is then transferred to the lipoamide cofactor of the H protein. The protein is Glycine dehydrogenase (decarboxylating) of Burkholderia cenocepacia (strain HI2424).